The sequence spans 244 residues: 5'-nucleotidase SurE 2 (244 aa).

The a divalent metal cation site is built by aspartate 8, aspartate 9, serine 39, and asparagine 96.

Belongs to the SurE nucleotidase family. A divalent metal cation is required as a cofactor.

It localises to the cytoplasm. The catalysed reaction is a ribonucleoside 5'-phosphate + H2O = a ribonucleoside + phosphate. Functionally, nucleotidase that shows phosphatase activity on nucleoside 5'-monophosphates. The chain is 5'-nucleotidase SurE 2 from Thermus thermophilus (strain ATCC BAA-163 / DSM 7039 / HB27).